The sequence spans 407 residues: tRNA pseudouridine synthase 4 (407 aa).

A disordered region spans residues 83-105 (FRPAPPHPNDRNRRRRKSNRLPD). Asp-115 (nucleophile) is an active-site residue. The tract at residues 274–298 (TEQDINPQDGDEKINAKSPTTNSVT) is disordered. Position 291 is a phosphoserine (Ser-291). At Thr-293 the chain carries Phosphothreonine. Ser-296 carries the post-translational modification Phosphoserine. At Thr-406 the chain carries Phosphothreonine.

The protein belongs to the pseudouridine synthase TruB family.

The protein localises to the nucleus. The protein resides in the mitochondrion. The catalysed reaction is uridine(55) in tRNA = pseudouridine(55) in tRNA. The enzyme catalyses a uridine in mRNA = a pseudouridine in mRNA. Its function is as follows. Responsible for synthesis of pseudouridine from uracil-55 in the psi GC loop of transfer RNAs. Also catalyzes pseudouridylation of mRNAs with the consensus sequence 5'-GGUUCRA-3'. The polypeptide is tRNA pseudouridine synthase 4 (Schizosaccharomyces pombe (strain 972 / ATCC 24843) (Fission yeast)).